The sequence spans 444 residues: Trigger factor (444 aa).

The 86-residue stretch at glycine 165–proline 250 folds into the PPIase FKBP-type domain.

It belongs to the FKBP-type PPIase family. Tig subfamily.

It is found in the cytoplasm. It carries out the reaction [protein]-peptidylproline (omega=180) = [protein]-peptidylproline (omega=0). Involved in protein export. Acts as a chaperone by maintaining the newly synthesized protein in an open conformation. Functions as a peptidyl-prolyl cis-trans isomerase. This Campylobacter jejuni subsp. jejuni serotype O:2 (strain ATCC 700819 / NCTC 11168) protein is Trigger factor (tig).